A 228-amino-acid chain; its full sequence is MDNYVLNLLQLCDSTFPTGAFSHSFGLETYIQDGIIFNKETFSKWNKAYIKEQLVYSDGLACRLAYEALENNDMDTIWMLDGMLRAQILARESREGSRIIGERLLTLGNQLYPSSRLTSYVDRIAKGVSYGHPAIAFALISHSLSIPKNTTVMSYLFSSNANLVQNAVRGIPLGQTQGQQLIKESQDFIADAWNLIETLTEDDFGITASGIEISQMRHEVLHIRIFMS.

This sequence belongs to the UreF family. In terms of assembly, ureD, UreF and UreG form a complex that acts as a GTP-hydrolysis-dependent molecular chaperone, activating the urease apoprotein by helping to assemble the nickel containing metallocenter of UreC. The UreE protein probably delivers the nickel.

It is found in the cytoplasm. In terms of biological role, required for maturation of urease via the functional incorporation of the urease nickel metallocenter. This Lachnoclostridium phytofermentans (strain ATCC 700394 / DSM 18823 / ISDg) (Clostridium phytofermentans) protein is Urease accessory protein UreF.